Reading from the N-terminus, the 128-residue chain is Large ribosomal subunit protein eL22 (128 aa).

This sequence belongs to the eukaryotic ribosomal protein eL22 family. As to quaternary structure, component of the large ribosomal subunit.

The protein localises to the cytoplasm. In terms of biological role, component of the large ribosomal subunit. The ribosome is a large ribonucleoprotein complex responsible for the synthesis of proteins in the cell. The sequence is that of Large ribosomal subunit protein eL22 (rpl22) from Ictalurus punctatus (Channel catfish).